The primary structure comprises 566 residues: Arginine--tRNA ligase (566 aa).

The short motif at 123-133 (PNIAKPFHIGH) is the 'HIGH' region element.

This sequence belongs to the class-I aminoacyl-tRNA synthetase family. In terms of assembly, monomer.

The protein resides in the cytoplasm. It catalyses the reaction tRNA(Arg) + L-arginine + ATP = L-arginyl-tRNA(Arg) + AMP + diphosphate. This is Arginine--tRNA ligase from Halothermothrix orenii (strain H 168 / OCM 544 / DSM 9562).